We begin with the raw amino-acid sequence, 432 residues long: Enolase (432 aa).

Residue glutamine 167 participates in (2R)-2-phosphoglycerate binding. The Proton donor role is filled by glutamate 209. 3 residues coordinate Mg(2+): aspartate 246, glutamate 287, and aspartate 314. Residues lysine 339, arginine 368, serine 369, and lysine 390 each contribute to the (2R)-2-phosphoglycerate site. Lysine 339 acts as the Proton acceptor in catalysis.

Belongs to the enolase family. Requires Mg(2+) as cofactor.

The protein resides in the cytoplasm. Its subcellular location is the secreted. It localises to the cell surface. The enzyme catalyses (2R)-2-phosphoglycerate = phosphoenolpyruvate + H2O. Its pathway is carbohydrate degradation; glycolysis; pyruvate from D-glyceraldehyde 3-phosphate: step 4/5. Catalyzes the reversible conversion of 2-phosphoglycerate (2-PG) into phosphoenolpyruvate (PEP). It is essential for the degradation of carbohydrates via glycolysis. The chain is Enolase from Prochlorococcus marinus (strain MIT 9211).